A 286-amino-acid polypeptide reads, in one-letter code: Bifunctional protein FolD (286 aa).

NADP(+) contacts are provided by residues 166-168 (GRS), Ser191, and Ile232.

The protein belongs to the tetrahydrofolate dehydrogenase/cyclohydrolase family. Homodimer.

It carries out the reaction (6R)-5,10-methylene-5,6,7,8-tetrahydrofolate + NADP(+) = (6R)-5,10-methenyltetrahydrofolate + NADPH. It catalyses the reaction (6R)-5,10-methenyltetrahydrofolate + H2O = (6R)-10-formyltetrahydrofolate + H(+). It functions in the pathway one-carbon metabolism; tetrahydrofolate interconversion. Functionally, catalyzes the oxidation of 5,10-methylenetetrahydrofolate to 5,10-methenyltetrahydrofolate and then the hydrolysis of 5,10-methenyltetrahydrofolate to 10-formyltetrahydrofolate. The chain is Bifunctional protein FolD from Herpetosiphon aurantiacus (strain ATCC 23779 / DSM 785 / 114-95).